The sequence spans 263 residues: Regulatory protein RecX (263 aa).

It belongs to the RecX family.

The protein resides in the cytoplasm. Functionally, modulates RecA activity. This chain is Regulatory protein RecX, found in Bacillus pumilus (strain SAFR-032).